Consider the following 274-residue polypeptide: Triosephosphate isomerase (274 aa).

Position 31-33 (31-33) interacts with substrate; it reads NWK. The Electrophile role is filled by His118. The active-site Proton acceptor is the Glu188. Substrate contacts are provided by residues Gly194, Ser234, and 255–256; that span reads GG.

The protein belongs to the triosephosphate isomerase family. Homodimer.

The protein localises to the cytoplasm. It catalyses the reaction D-glyceraldehyde 3-phosphate = dihydroxyacetone phosphate. The protein operates within carbohydrate biosynthesis; gluconeogenesis. Its pathway is carbohydrate degradation; glycolysis; D-glyceraldehyde 3-phosphate from glycerone phosphate: step 1/1. In terms of biological role, involved in the gluconeogenesis. Catalyzes stereospecifically the conversion of dihydroxyacetone phosphate (DHAP) to D-glyceraldehyde-3-phosphate (G3P). The sequence is that of Triosephosphate isomerase from Chlamydia trachomatis serovar L2 (strain ATCC VR-902B / DSM 19102 / 434/Bu).